A 350-amino-acid polypeptide reads, in one-letter code: Atypical chemokine receptor 4 (350 aa).

Residues 1–42 (MALEQNQSTDYYYEENEMNGTYDYSQYELICIKEDVREFAKV) are Extracellular-facing. 2 N-linked (GlcNAc...) asparagine glycosylation sites follow: Asn6 and Asn19. A helical membrane pass occupies residues 43–63 (FLPVFLTIVFVIGLAGNSMVV). Over 64–87 (AIYAYYKKQRTKTDVYILNLAVAD) the chain is Cytoplasmic. A helical transmembrane segment spans residues 88–108 (LLLLFTLPFWAVNAVHGWVLG). Residues 109 to 113 (KIMCK) lie on the Extracellular side of the membrane. Cys112 and Cys184 are oxidised to a cystine. A helical membrane pass occupies residues 114–134 (ITSALYTLNFVSGMQFLACIS). Residues 135–154 (IDRYVAVTKVPSQSGVGKPC) lie on the Cytoplasmic side of the membrane. A helical transmembrane segment spans residues 155–175 (WIICFCVWMAAILLSIPQLVF). The Extracellular portion of the chain corresponds to 176–201 (YTVNDNARCIPIFPRYLGTSMKALIQ). Residues 202–222 (MLEICIGFVVPFLIMGVCYFI) traverse the membrane as a helical segment. Residues 223–240 (TARTLMKMPNIKISRPLK) are Cytoplasmic-facing. Residues 241 to 261 (VLLTVVIVFIVTQLPYNIVKF) traverse the membrane as a helical segment. Residues 262-289 (CRAIDIIYSLITSCNMSKRMDIAIQVTE) are Extracellular-facing. The helical transmembrane segment at 290 to 310 (SIALFHSCLNPILYVFMGASF) threads the bilayer. Residues 311-350 (KNYVMKVAKKYGSWRRQRQSVEEFPFDSEGPTEPTSTFSI) lie on the Cytoplasmic side of the membrane.

The protein belongs to the G-protein coupled receptor 1 family. Atypical chemokine receptor subfamily. In terms of assembly, forms heteromers with CXCR3. Interacts with ARRB1 and ARRB2. Post-translationally, the Ser/Thr residues in the C-terminal cytoplasmic tail may be phosphorylated. In terms of tissue distribution, predominantly expressed in heart. Lower expression in lung, pancreas, spleen, colon, skeletal muscle and small intestine.

Its subcellular location is the early endosome. The protein localises to the recycling endosome. The protein resides in the cell membrane. Atypical chemokine receptor that controls chemokine levels and localization via high-affinity chemokine binding that is uncoupled from classic ligand-driven signal transduction cascades, resulting instead in chemokine sequestration, degradation, or transcytosis. Also known as interceptor (internalizing receptor) or chemokine-scavenging receptor or chemokine decoy receptor. Acts as a receptor for chemokines CCL2, CCL8, CCL13, CCL19, CCL21 and CCL25. Chemokine-binding does not activate G-protein-mediated signal transduction but instead induces beta-arrestin recruitment, leading to ligand internalization. Plays an important role in controlling the migration of immune and cancer cells that express chemokine receptors CCR7 and CCR9, by reducing the availability of CCL19, CCL21, and CCL25 through internalization. Negatively regulates CXCR3-induced chemotaxis. Regulates T-cell development in the thymus. The sequence is that of Atypical chemokine receptor 4 (ACKR4) from Homo sapiens (Human).